Reading from the N-terminus, the 111-residue chain is Photosystem II reaction center Psb28 protein (111 aa).

Belongs to the Psb28 family. As to quaternary structure, part of the photosystem II complex.

The protein resides in the cellular thylakoid membrane. This chain is Photosystem II reaction center Psb28 protein, found in Gloeothece citriformis (strain PCC 7424) (Cyanothece sp. (strain PCC 7424)).